The sequence spans 455 residues: L-serine dehydratase 2 (455 aa).

Belongs to the iron-sulfur dependent L-serine dehydratase family. It depends on [4Fe-4S] cluster as a cofactor. Post-translationally, activated by post-translational modification by a system involving at least three gene products. Activation is mimicked in vitro by iron and dithiothreitol. There is considerable evidence for a free-radical activation mechanism.

The catalysed reaction is L-serine = pyruvate + NH4(+). The protein operates within carbohydrate biosynthesis; gluconeogenesis. In terms of biological role, also deaminates threonine, particularly when it is present in high concentration. In Escherichia coli (strain K12), this protein is L-serine dehydratase 2 (sdaB).